We begin with the raw amino-acid sequence, 376 residues long: tRNA (guanine(26)-N(2))-dimethyltransferase (376 aa).

Positions 4-373 constitute a Trm1 methyltransferase domain; that stretch reads VAVKEGLARI…APFGVVAEVM (370 aa). 5 residues coordinate S-adenosyl-L-methionine: Arg36, Arg61, Asp78, Asp120, and Ala121.

It belongs to the class I-like SAM-binding methyltransferase superfamily. Trm1 family.

It catalyses the reaction guanosine(26) in tRNA + 2 S-adenosyl-L-methionine = N(2)-dimethylguanosine(26) in tRNA + 2 S-adenosyl-L-homocysteine + 2 H(+). In terms of biological role, dimethylates a single guanine residue at position 26 of a number of tRNAs using S-adenosyl-L-methionine as donor of the methyl groups. This Thermococcus kodakarensis (strain ATCC BAA-918 / JCM 12380 / KOD1) (Pyrococcus kodakaraensis (strain KOD1)) protein is tRNA (guanine(26)-N(2))-dimethyltransferase.